An 833-amino-acid polypeptide reads, in one-letter code: Putative GPI inositol-deacylase C (833 aa).

S130 is an active-site residue. Residues N191 and N456 are each glycosylated (N-linked (GlcNAc...) asparagine). The next 5 membrane-spanning stretches (helical) occupy residues 521–541 (ILFI…QFHA), 560–580 (YLLT…LSQV), 617–637 (VLAP…TELV), 672–692 (TVFV…QLAF), and 723–743 (TICV…AVWI). Residue N772 is glycosylated (N-linked (GlcNAc...) asparagine). The helical transmembrane segment at 787-807 (LLLAYTSLHCLFYGMMQAFMI) threads the bilayer.

The protein belongs to the GPI inositol-deacylase family.

The protein localises to the endoplasmic reticulum membrane. Functionally, involved in inositol deacylation of GPI-anchored proteins which plays important roles in the quality control and ER-associated degradation of GPI-anchored proteins. This is Putative GPI inositol-deacylase C (BST1C) from Yarrowia lipolytica (strain CLIB 122 / E 150) (Yeast).